The sequence spans 119 residues: Large ribosomal subunit protein bL20 (119 aa).

This sequence belongs to the bacterial ribosomal protein bL20 family.

Its function is as follows. Binds directly to 23S ribosomal RNA and is necessary for the in vitro assembly process of the 50S ribosomal subunit. It is not involved in the protein synthesizing functions of that subunit. This is Large ribosomal subunit protein bL20 from Clostridium acetobutylicum (strain ATCC 824 / DSM 792 / JCM 1419 / IAM 19013 / LMG 5710 / NBRC 13948 / NRRL B-527 / VKM B-1787 / 2291 / W).